We begin with the raw amino-acid sequence, 319 residues long: Phosphoribosylformylglycinamidine cyclo-ligase (319 aa).

Belongs to the AIR synthase family.

Its subcellular location is the cytoplasm. The enzyme catalyses 2-formamido-N(1)-(5-O-phospho-beta-D-ribosyl)acetamidine + ATP = 5-amino-1-(5-phospho-beta-D-ribosyl)imidazole + ADP + phosphate + H(+). Its pathway is purine metabolism; IMP biosynthesis via de novo pathway; 5-amino-1-(5-phospho-D-ribosyl)imidazole from N(2)-formyl-N(1)-(5-phospho-D-ribosyl)glycinamide: step 2/2. In Sulfurisphaera tokodaii (strain DSM 16993 / JCM 10545 / NBRC 100140 / 7) (Sulfolobus tokodaii), this protein is Phosphoribosylformylglycinamidine cyclo-ligase.